The chain runs to 347 residues: Fe(2+) transport protein 1 (347 aa).

An N-terminal signal peptide occupies residues 1–22 (MASNSALLMKTIFLVLIFVSFA). Residues 23–52 (ISPATSTAPEECGSESANPCVNKAKALPLK) lie on the Extracellular side of the membrane. A helical membrane pass occupies residues 53–73 (VIAIFVILIASMIGVGAPLFS). The Cytoplasmic segment spans residues 74–84 (RNVSFLQPDGN). A helical membrane pass occupies residues 85–105 (IFTIIKCFASGIILGTGFMHV). The Extracellular segment spans residues 106-125 (LPDSFEMLSSICLEENPWHK). The helical transmembrane segment at 126–146 (FPFSGFLAMLSGLITLAIDSM) threads the bilayer. Over 147–192 (ATSLYTSKNAVGIMPHGHGHGHGPANDVTLPIKEDDSSNAQLLRYR) the chain is Cytoplasmic. Glycyl lysine isopeptide (Lys-Gly) (interchain with G-Cter in ubiquitin) cross-links involve residues Lys154 and Lys179. The chain crosses the membrane as a helical span at residues 193–213 (VIAMVLELGIIVHSVVIGLSL). Over 214-224 (GATSDTCTIKG) the chain is Extracellular. Residues 225 to 245 (LIAALCFHQMFEGMGLGGCIL) form a helical membrane-spanning segment. Residues 246–254 (QAEYTNMKK) are Cytoplasmic-facing. A helical membrane pass occupies residues 255–275 (FVMAFFFAVTTPFGIALGIAL). Residues 276-286 (STVYQDNSPKA) lie on the Extracellular side of the membrane. A helical membrane pass occupies residues 287–307 (LITVGLLNACSAGLLIYMALV). The Cytoplasmic portion of the chain corresponds to 308 to 326 (DLLAAEFMGPKLQGSIKMQ). A helical membrane pass occupies residues 327-347 (FKCLIAALLGCGGMSIIAKWA).

It belongs to the ZIP transporter (TC 2.A.5) family. Interacts with FREE1. In terms of processing, monoubiquitinated on several Lys residues. Monoubiquitination controls trafficking from the plasma membrane and targeting to the vacuole. Expressed in the external cell layers of the root including the lateral branching zone. Also detected in flowers before pollination.

The protein resides in the cell membrane. It is found in the early endosome. Its subcellular location is the golgi apparatus. The protein localises to the trans-Golgi network. It localises to the vacuole. High-affinity iron transporter that plays a key role in the uptake of iron from the rhizosphere across the plasma membrane in the root epidermal layer. Acts as the principal regulator of iron homeostasis in planta. Also mediates the heavy metals uptake under iron-deficiency by its ability to transport cobalt, cadmium, manganese and/or zinc ions. This Arabidopsis thaliana (Mouse-ear cress) protein is Fe(2+) transport protein 1 (IRT1).